Consider the following 221-residue polypeptide: Probable septum site-determining protein MinC (221 aa).

The protein belongs to the MinC family. As to quaternary structure, interacts with MinD and FtsZ.

Cell division inhibitor that blocks the formation of polar Z ring septums. Rapidly oscillates between the poles of the cell to destabilize FtsZ filaments that have formed before they mature into polar Z rings. Prevents FtsZ polymerization. The polypeptide is Probable septum site-determining protein MinC (Shewanella sp. (strain ANA-3)).